Reading from the N-terminus, the 195-residue chain is Nucleoside-triphosphatase THEP1 (195 aa).

ATP-binding positions include 11-18 (GRPGSGKS) and 103-110 (VVVIDEIG).

It belongs to the THEP1 NTPase family.

The enzyme catalyses a ribonucleoside 5'-triphosphate + H2O = a ribonucleoside 5'-diphosphate + phosphate + H(+). Its function is as follows. Has nucleotide phosphatase activity towards ATP, GTP, CTP, TTP and UTP. May hydrolyze nucleoside diphosphates with lower efficiency. The protein is Nucleoside-triphosphatase THEP1 of Korarchaeum cryptofilum (strain OPF8).